Consider the following 317-residue polypeptide: USG-1 protein homolog (317 aa).

This sequence belongs to the aspartate-semialdehyde dehydrogenase family.

The sequence is that of USG-1 protein homolog (usg) from Haemophilus influenzae (strain ATCC 51907 / DSM 11121 / KW20 / Rd).